The following is a 270-amino-acid chain: Small ribosomal subunit protein uS2 (270 aa).

A compositionally biased stretch (acidic residues) spans 207-225 (EEPENTEEAAEEAATEEVV). Positions 207–270 (EEPENTEEAA…SESAPAPVAA (64 aa)) are disordered. The segment covering 226–258 (ETAAAEAAAATNADNWDVAPDAGAGAADWAATD) has biased composition (low complexity).

Belongs to the universal ribosomal protein uS2 family. Component of the small ribosomal subunit. Mature ribosomes consist of a small (40S) and a large (60S) subunit. The 40S subunit contains about 33 different proteins and 1 molecule of RNA (18S). The 60S subunit contains about 49 different proteins and 3 molecules of RNA (25S, 5.8S and 5S). Interacts with RPS21.

The protein resides in the cytoplasm. In terms of biological role, required for the assembly and/or stability of the 40S ribosomal subunit. Required for the processing of the 20S rRNA-precursor to mature 18S rRNA in a late step of the maturation of 40S ribosomal subunits. The polypeptide is Small ribosomal subunit protein uS2 (Yarrowia lipolytica (strain CLIB 122 / E 150) (Yeast)).